The following is a 921-amino-acid chain: Probable glucan 1,3-alpha-glucosidase (921 aa).

The first 20 residues, 1-20 (MRSLLFVLSLICFCSQTALS), serve as a signal peptide directing secretion. Catalysis depends on D512, which acts as the Nucleophile. Residue E515 is part of the active site. D588 (proton donor) is an active-site residue. 2 N-linked (GlcNAc...) asparagine glycosylation sites follow: N689 and N804.

It belongs to the glycosyl hydrolase 31 family. Heterodimer of a catalytic alpha subunit (PSL5) and a beta subunit (PSL4). As to expression, expressed in roots, rosette leaves, leaf blades, mature stems, cauline leaves, flower buds, flowers and siliques.

The protein resides in the endoplasmic reticulum. It carries out the reaction Hydrolysis of terminal (1-&gt;3)-alpha-D-glucosidic links in (1-&gt;3)-alpha-D-glucans.. It functions in the pathway glycan metabolism; N-glycan metabolism. In terms of biological role, cleaves sequentially the 2 innermost alpha-1,3-linked glucose residues from the Glc(2)Man(9)GlcNAc(2) oligosaccharide precursor of immature glycoproteins. Essential for stable accumulation of the receptor EFR that determines the specific perception of bacterial elongation factor Tu (EF-Tu), a potent elicitor of the defense response to pathogen-associated molecular patterns (PAMPs). Required for sustained activation of EFR-mediated signaling, but not receptor FLS2-mediated signaling elicited by the bacterial flagellin flg22. The sequence is that of Probable glucan 1,3-alpha-glucosidase (PSL5) from Arabidopsis thaliana (Mouse-ear cress).